A 78-amino-acid polypeptide reads, in one-letter code: UPF0270 protein YE3952 (78 aa).

Belongs to the UPF0270 family.

This chain is UPF0270 protein YE3952, found in Yersinia enterocolitica serotype O:8 / biotype 1B (strain NCTC 13174 / 8081).